The primary structure comprises 356 residues: Stomatin-like protein 2, mitochondrial (356 aa).

A mitochondrion-targeting transit peptide spans 1–28; the sequence is MLARAARGTGALLLRGSLLASGRAPRRA. The residue at position 17 (serine 17) is a Phosphoserine; by PKC/PRKCZ. Tyrosine 124 bears the Phosphotyrosine mark. N6-acetyllysine; alternate is present on lysine 145. Lysine 145 carries the post-translational modification N6-succinyllysine; alternate. The stretch at 215–252 forms a coiled coil; that stretch reads INVAEGKKQAQILASEAEKAEQINQAAGEASAVLAKAK. Position 233 is an N6-acetyllysine (lysine 233). A disordered region spans residues 321–356; it reads KAPVPGTPDSLSSGSSRDVQGTDASLDEELDRVKMS. Residue threonine 327 is modified to Phosphothreonine. Residues 329-343 are compositionally biased toward polar residues; sequence DSLSSGSSRDVQGTD. Residue serine 330 is modified to Phosphoserine.

Belongs to the band 7/mec-2 family. In terms of assembly, forms homooligomers. Interacts with MFN2; may form heterooligomers. Interacts with CACNA2D2. Interacts with PHB1 and PHB2; recruits them to cardiolipin-enriched mitochondrial membranes and stabilizes them. Post-translationally, hyperphosphorylated at Ser-17 in some patients with monoclonal gammopathy of undetermined significance (MGUS), multiple myeloma (MM) and Waldenstrom macroglobulinemia due to impaired dephosphorylation by PP2A. Ubiquitously expressed at low levels. Expressed in lymphoid tissues (at protein level).

It is found in the cell membrane. It localises to the mitochondrion. Its subcellular location is the mitochondrion inner membrane. The protein localises to the mitochondrion intermembrane space. The protein resides in the membrane raft. It is found in the cytoplasm. It localises to the cytoskeleton. Functionally, mitochondrial protein that probably regulates the biogenesis and the activity of mitochondria. Stimulates cardiolipin biosynthesis, binds cardiolipin-enriched membranes where it recruits and stabilizes some proteins including prohibitin and may therefore act in the organization of functional microdomains in mitochondrial membranes. Through regulation of the mitochondrial function may play a role into several biological processes including cell migration, cell proliferation, T-cell activation, calcium homeostasis and cellular response to stress. May play a role in calcium homeostasis through negative regulation of calcium efflux from mitochondria. Required for mitochondrial hyperfusion a pro-survival cellular response to stress which results in increased ATP production by mitochondria. May also regulate the organization of functional domains at the plasma membrane and play a role in T-cell activation through association with the T-cell receptor signaling complex and its regulation. The polypeptide is Stomatin-like protein 2, mitochondrial (STOML2) (Homo sapiens (Human)).